A 171-amino-acid polypeptide reads, in one-letter code: Adenine phosphoribosyltransferase (171 aa).

Belongs to the purine/pyrimidine phosphoribosyltransferase family. As to quaternary structure, homodimer.

The protein resides in the cytoplasm. The enzyme catalyses AMP + diphosphate = 5-phospho-alpha-D-ribose 1-diphosphate + adenine. It participates in purine metabolism; AMP biosynthesis via salvage pathway; AMP from adenine: step 1/1. Functionally, catalyzes a salvage reaction resulting in the formation of AMP, that is energically less costly than de novo synthesis. This is Adenine phosphoribosyltransferase from Syntrophotalea carbinolica (strain DSM 2380 / NBRC 103641 / GraBd1) (Pelobacter carbinolicus).